Here is a 190-residue protein sequence, read N- to C-terminus: Adenine phosphoribosyltransferase (190 aa).

The protein belongs to the purine/pyrimidine phosphoribosyltransferase family. In terms of assembly, homodimer.

The protein resides in the cytoplasm. It catalyses the reaction AMP + diphosphate = 5-phospho-alpha-D-ribose 1-diphosphate + adenine. It functions in the pathway purine metabolism; AMP biosynthesis via salvage pathway; AMP from adenine: step 1/1. Its function is as follows. Catalyzes a salvage reaction resulting in the formation of AMP, that is energically less costly than de novo synthesis. The protein is Adenine phosphoribosyltransferase of Cupriavidus taiwanensis (strain DSM 17343 / BCRC 17206 / CCUG 44338 / CIP 107171 / LMG 19424 / R1) (Ralstonia taiwanensis (strain LMG 19424)).